Consider the following 301-residue polypeptide: GTPase Era (301 aa).

Residues 7–175 (YCGFIAIVGR…AGIVRKHLPE (169 aa)) enclose the Era-type G domain. The segment at 15-22 (GRPNVGKS) is G1. 15 to 22 (GRPNVGKS) lines the GTP pocket. Residues 41-45 (QTTRH) are G2. Residues 62–65 (DTPG) form a G3 region. GTP is bound by residues 62–66 (DTPGL) and 124–127 (NKVD). Residues 124 to 127 (NKVD) form a G4 region. Positions 154 to 156 (LSA) are G5. The KH type-2 domain maps to 198-283 (IREKLMRFLG…HLELWVKVKS (86 aa)).

It belongs to the TRAFAC class TrmE-Era-EngA-EngB-Septin-like GTPase superfamily. Era GTPase family. In terms of assembly, monomer.

It is found in the cytoplasm. It localises to the cell inner membrane. Functionally, an essential GTPase that binds both GDP and GTP, with rapid nucleotide exchange. Plays a role in 16S rRNA processing and 30S ribosomal subunit biogenesis and possibly also in cell cycle regulation and energy metabolism. This is GTPase Era from Enterobacter sp. (strain 638).